Reading from the N-terminus, the 343-residue chain is SH2 domain-containing adapter protein D (343 aa).

The interval 1 to 176 is disordered; sequence MAKWLRDYLN…PADEYDQPWE (176 aa). Basic and acidic residues-rich tracts occupy residues 29 to 40 and 73 to 82; these read DILRAYREQKDL and IKVEAADMAR. Residues 92-102 are compositionally biased toward acidic residues; it reads EEPEAETEYSD. Residues 160–176 show a composition bias toward basic and acidic residues; the sequence is RPLEDERPADEYDQPWE. The region spanning 225–320 is the SH2 domain; the sequence is WFHGPLSRAE…AEHLALLYPV (96 aa). Positions 322 to 343 are disordered; that stretch reads SSQSSQGPCTLAAKPERGQGDP.

In terms of processing, tyrosine phosphorylated by ABL. As to expression, specifically expressed in brain.

Functionally, may function as an adapter protein. The sequence is that of SH2 domain-containing adapter protein D (Shd) from Mus musculus (Mouse).